Reading from the N-terminus, the 426-residue chain is Protein EARLY STARVATION 1, chloroplastic (426 aa).

The N-terminal 58 residues, 1–58, are a transit peptide targeting the chloroplast; the sequence is MSEMAASSAISLLDIKLRRFGVGASNHELRLTKWFKGDQAGAPTRRFTCFADMLAPIR. Disordered regions lie at residues 106–127 and 396–426; these read CTPRLTGPQSRDTPPKRDTGIA and QPRERPPGVYPNLEFGPSPPPEPDLPPDQPQ. Basic and acidic residues predominate over residues 118–127; it reads TPPKRDTGIA. Residues 412–426 are compositionally biased toward pro residues; that stretch reads PSPPPEPDLPPDQPQ.

This sequence belongs to the ESV1 family.

It is found in the plastid. The protein localises to the chloroplast stroma. The protein resides in the plastid stroma. Its function is as follows. Binds preferentially to highly ordered alpha-glucans, such as starch and crystalline maltodextrins. Involved in the organization of the starch granule matrix, thus influencing starch turnover by modulating the accessibility of starch polymers to modifying and degrading enzymes involved in phosphorylation, hydrolyzes and synthesis, including starch synthases (SSI and SSIII), starch phosphorylases (PHS1), isoamylase, beta-amylase, glucan water dikinase (GWD) and phosphoglucan water dikinase (PWD). Prevents GWD- and PWD-mediated starch phosphorylation, and subsequent degradation. Required for the control of starch degradation in leaves and starch distribution in nonphotosynthetic parts (e.g. cells immediately adjacent to veins, columella cells of root caps, stems, flowers and siliques) by limiting the hasty depletion of starch reserves during the night. Promotes gravitropic responses, negative in shoots but positive in roots, by maintaining starch granules (statoliths) accumulation in hypocotyls and roots columella, especially in dark conditions and in the endodermis, where starch is formed from transported glucose-6-phosphates. This Arabidopsis thaliana (Mouse-ear cress) protein is Protein EARLY STARVATION 1, chloroplastic.